The chain runs to 150 residues: D-aminoacyl-tRNA deacylase (150 aa).

Residues 138 to 139 (GP) carry the Gly-cisPro motif, important for rejection of L-amino acids motif.

The protein belongs to the DTD family. In terms of assembly, homodimer.

The protein localises to the cytoplasm. The catalysed reaction is glycyl-tRNA(Ala) + H2O = tRNA(Ala) + glycine + H(+). It carries out the reaction a D-aminoacyl-tRNA + H2O = a tRNA + a D-alpha-amino acid + H(+). In terms of biological role, an aminoacyl-tRNA editing enzyme that deacylates mischarged D-aminoacyl-tRNAs. Also deacylates mischarged glycyl-tRNA(Ala), protecting cells against glycine mischarging by AlaRS. Acts via tRNA-based rather than protein-based catalysis; rejects L-amino acids rather than detecting D-amino acids in the active site. By recycling D-aminoacyl-tRNA to D-amino acids and free tRNA molecules, this enzyme counteracts the toxicity associated with the formation of D-aminoacyl-tRNA entities in vivo and helps enforce protein L-homochirality. The chain is D-aminoacyl-tRNA deacylase from Azobacteroides pseudotrichonymphae genomovar. CFP2.